The sequence spans 536 residues: Probable tyrosyl-DNA phosphodiesterase (536 aa).

The active-site Nucleophile is the histidine 122. Lysine 124 lines the substrate pocket. Residues serine 315–serine 318 are interaction with DNA. Catalysis depends on histidine 401, which acts as the Proton donor/acceptor. Lysine 403 is a binding site for substrate.

The protein belongs to the tyrosyl-DNA phosphodiesterase family.

It localises to the nucleus. In terms of biological role, DNA repair enzyme that can remove a variety of covalent adducts from DNA through hydrolysis of a 3'-phosphodiester bond, giving rise to DNA with a free 3' phosphate. Catalyzes the hydrolysis of dead-end complexes between DNA and the topoisomerase I active site tyrosine residue. Hydrolyzes 3'-phosphoglycolates on protruding 3' ends on DNA double-strand breaks due to DNA damage by radiation and free radicals. Acts on blunt-ended double-strand DNA breaks and on single-stranded DNA. May have low 3'exonuclease activity and may be able to remove a single nucleoside from the 3'end of DNA and RNA molecules with 3'hydroxyl groups. Has no exonuclease activity towards DNA or RNA with a 3'phosphate. This chain is Probable tyrosyl-DNA phosphodiesterase, found in Schizosaccharomyces pombe (strain 972 / ATCC 24843) (Fission yeast).